The sequence spans 91 residues: B3 domain-containing protein Os03g0164300 (91 aa).

A DNA-binding region (TF-B3) is located at residues 1 to 91 (MTNAKMTFAV…VLVLKVHVLK (91 aa)).

The protein localises to the nucleus. This Oryza sativa subsp. japonica (Rice) protein is B3 domain-containing protein Os03g0164300.